Here is a 428-residue protein sequence, read N- to C-terminus: Cell division protein FtsZ (428 aa).

Residues 73–77, 160–162, Glu-191, Arg-195, and Asp-239 contribute to the GTP site; these read GGGGN and GTG. The segment at 378–428 is disordered; the sequence is NAANARVVSAPPKRTPTQTPLTNSPAPTPEPKEKSGLDIPDFLQRRRPPKN. Positions 392 to 402 are enriched in polar residues; that stretch reads TPTQTPLTNSP.

The protein belongs to the FtsZ family. Homodimer. Polymerizes to form a dynamic ring structure in a strictly GTP-dependent manner. Interacts directly with several other division proteins.

It is found in the cytoplasm. In terms of biological role, essential cell division protein that forms a contractile ring structure (Z ring) at the future cell division site. The regulation of the ring assembly controls the timing and the location of cell division. One of the functions of the FtsZ ring is to recruit other cell division proteins to the septum to produce a new cell wall between the dividing cells. Binds GTP and shows GTPase activity. The protein is Cell division protein FtsZ of Nostoc sp. (strain PCC 7120 / SAG 25.82 / UTEX 2576).